The following is a 259-amino-acid chain: Undecaprenyl-diphosphatase 4 (259 aa).

A run of 8 helical transmembrane segments spans residues 1-21 (MNWL…FLPI), 39-59 (AGLF…FIYY), 71-91 (FSKL…IGLL), 99-119 (ISKT…FLYM), 133-153 (ITYK…FPAI), 174-194 (AYFS…LQFV), 208-228 (SLIV…SWMI), and 239-259 (FAYY…TDVF).

It belongs to the UppP family.

It localises to the cell membrane. It carries out the reaction di-trans,octa-cis-undecaprenyl diphosphate + H2O = di-trans,octa-cis-undecaprenyl phosphate + phosphate + H(+). Catalyzes the dephosphorylation of undecaprenyl diphosphate (UPP). Confers resistance to bacitracin. In Bacillus cereus (strain ZK / E33L), this protein is Undecaprenyl-diphosphatase 4.